The sequence spans 276 residues: N-acetylmuramoyl-L-alanine amidase AmiD (276 aa).

The first 16 residues, 1 to 16, serve as a signal peptide directing secretion; the sequence is MRRFFWLVAAALLLAG. Cysteine 17 carries the N-palmitoyl cysteine lipid modification. Residue cysteine 17 is the site of S-diacylglycerol cysteine attachment. Positions 42–179 constitute an N-acetylmuramoyl-L-alanine amidase domain; that stretch reads PRIKVLVIHY…APQRKDDPGP (138 aa). Histidine 50 provides a ligand contact to Zn(2+). 51–52 is a substrate binding site; that stretch reads YT. Glutamate 119 acts as the Proton acceptor in catalysis. Zn(2+)-binding residues include histidine 166 and aspartate 176.

The protein belongs to the N-acetylmuramoyl-L-alanine amidase 2 family. It depends on Zn(2+) as a cofactor.

It localises to the cell outer membrane. It carries out the reaction Hydrolyzes the link between N-acetylmuramoyl residues and L-amino acid residues in certain cell-wall glycopeptides.. This Escherichia coli (strain K12) protein is N-acetylmuramoyl-L-alanine amidase AmiD (amiD).